The primary structure comprises 116 residues: Large ribosomal subunit protein bL19c (116 aa).

Belongs to the bacterial ribosomal protein bL19 family.

Its subcellular location is the plastid. It is found in the chloroplast. The protein is Large ribosomal subunit protein bL19c of Cyanidium caldarium (Red alga).